The following is a 231-amino-acid chain: MLRKLAAELLGTFVLVFGGCGSVVFAAAFPELGIGFVGVSLAFGLTVLTMIYAVGHISGGHFNPAVTIGLWAGGRFRAVEVIPYIISQVIGGILAAAVLYVIASGQVGFDATTSGFASNGFGEHSPGGFSLQSAIVAEIVLTAIFLIVIIGATDRRAPPGFAPLAIGLALVLINLISIPITNTSVNPARSTAVAIFQNTWALEQLWFFWVMPIIGGIVGGGIYRLLFAEKQ.

2 helical membrane passes run 9-29 (LLGTFVLVFGGCGSVVFAAAF) and 34-54 (IGFVGVSLAFGLTVLTMIYAV). The NPA 1 signature appears at 63–65 (NPA). The next 3 membrane-spanning stretches (helical) occupy residues 82–102 (IPYIISQVIGGILAAAVLYVI), 133–153 (SAIVAEIVLTAIFLIVIIGAT), and 160–180 (GFAPLAIGLALVLINLISIPI). Positions 186–188 (NPA) match the NPA 2 motif. Residues 202-222 (LEQLWFFWVMPIIGGIVGGGI) form a helical membrane-spanning segment.

This sequence belongs to the MIP/aquaporin (TC 1.A.8) family. In terms of assembly, homotetramer.

The protein localises to the cell inner membrane. It catalyses the reaction H2O(in) = H2O(out). In terms of biological role, channel that permits osmotically driven movement of water in both directions. It is involved in the osmoregulation and in the maintenance of cell turgor during volume expansion in rapidly growing cells. It mediates rapid entry or exit of water in response to abrupt changes in osmolarity. This Photorhabdus laumondii subsp. laumondii (strain DSM 15139 / CIP 105565 / TT01) (Photorhabdus luminescens subsp. laumondii) protein is Aquaporin Z.